The following is a 150-amino-acid chain: UPF0178 protein PSEEN5341 (150 aa).

Belongs to the UPF0178 family.

The protein is UPF0178 protein PSEEN5341 of Pseudomonas entomophila (strain L48).